A 120-amino-acid polypeptide reads, in one-letter code: Movement protein TGB2 (120 aa).

The Cytoplasmic segment spans residues 1 to 8 (MPFAQPPD). A helical membrane pass occupies residues 9–29 (YSKSVFPIAVGIAVAVVLFTL). Topologically, residues 30-71 (TRSTLPQVGDNIHNLPHGGNYQDGTKRISYCGPRDSFPSSSL) are lumenal. The chain crosses the membrane as a helical span at residues 72–92 (ISSGTPMIIGIIIFLIFAIYV). Over 93 to 120 (SEKWSRSGSRRCSCCVPGAPACTATVHE) the chain is Cytoplasmic.

This sequence belongs to the Tymovirales TGBp2 protein family.

It is found in the host endoplasmic reticulum membrane. Functionally, plays a role in viral cell-to-cell propagation, by facilitating genome transport to neighboring plant cells through plasmosdesmata,. The chain is Movement protein TGB2 from Crataegus (hawthorn).